The following is an 82-amino-acid chain: Teratocyte protein CftICK-IV (82 aa).

An N-terminal signal peptide occupies residues 1-21 (MAKILLTFIILTCLIVTITPA).

Contains 4 disulfide bonds. In terms of tissue distribution, abundantly expressed by teratocytes, which are extra-embryonic cells released by parasitoid wasps into their hosts during larval eclosion.

The protein localises to the secreted. This endoparasitoid wasp peptide has immununosuppressive and insecticidal activities. Suppress cellular immunity which is detectable as a reduction of hemocyte spread index in the host. In vivo, ingestion of this peptide moderately reduces leaf consumption of D.saccharalis, a permissive host for the lepidoptere C.flavipes. The protein is Teratocyte protein CftICK-IV of Cotesia flavipes (Parasitic wasp).